A 111-amino-acid polypeptide reads, in one-letter code: uncharacterized protein (111 aa).

This is an uncharacterized protein from Paracoccus denitrificans.